We begin with the raw amino-acid sequence, 149 residues long: Nucleoside diphosphate kinase (149 aa).

Positions 9, 57, 85, 91, 102, and 112 each coordinate ATP. His-115 serves as the catalytic Pros-phosphohistidine intermediate.

Belongs to the NDK family. Homotetramer. The cofactor is Mg(2+).

The protein resides in the cytoplasm. It carries out the reaction dZDP + ATP = dZTP + ADP. The catalysed reaction is a 2'-deoxyribonucleoside 5'-diphosphate + ATP = a 2'-deoxyribonucleoside 5'-triphosphate + ADP. It catalyses the reaction a ribonucleoside 5'-diphosphate + ATP = a ribonucleoside 5'-triphosphate + ADP. The protein operates within purine metabolism. Functionally, major role in the synthesis of nucleoside triphosphates other than ATP. The ATP gamma phosphate is transferred to the NDP beta phosphate via a ping-pong mechanism, using a phosphorylated active-site intermediate. Its function is as follows. (Microbial infection) Catalyzes the phosphorylation of dZDP to dZTP, when the bacterium is infected by a phage that produces the substrate for the synthesis of dZTP (2- amino-2'-deoxyadenosine 5'-triphosphate), which is then used by the phage as a DNA polymerase substrate. The chain is Nucleoside diphosphate kinase from Synechococcus elongatus (strain ATCC 33912 / PCC 7942 / FACHB-805) (Anacystis nidulans R2).